The primary structure comprises 269 residues: tRNA pseudouridine synthase A (269 aa).

The active-site Nucleophile is D51. Substrate is bound at residue Y109.

Belongs to the tRNA pseudouridine synthase TruA family. Homodimer.

It carries out the reaction uridine(38/39/40) in tRNA = pseudouridine(38/39/40) in tRNA. Functionally, formation of pseudouridine at positions 38, 39 and 40 in the anticodon stem and loop of transfer RNAs. The sequence is that of tRNA pseudouridine synthase A from Histophilus somni (strain 129Pt) (Haemophilus somnus).